A 223-amino-acid polypeptide reads, in one-letter code: Class E basic helix-loop-helix protein 23 (223 aa).

The tract at residues 32-93 (PETTRGFGAS…GVAVDARRRP (62 aa)) is disordered. The bHLH domain maps to 98–152 (SLRLSINARERRRMHDLNDALDGLRAVIPYAHSPSVRKLSKIATLLLAKNYILMQ).

Expressed in brain and retina.

The protein localises to the nucleus. Its function is as follows. May function as transcriptional repressor. May modulate the expression of genes required for the differentiation and/or maintenance of pancreatic and neuronal cell types. May be important for rod bipolar cell maturation. The polypeptide is Class E basic helix-loop-helix protein 23 (Bhlhe23) (Mus musculus (Mouse)).